A 201-amino-acid chain; its full sequence is Holliday junction branch migration complex subunit RuvA (201 aa).

Residues 1-64 (MIGRLRGTLA…EDAQLLYGFA (64 aa)) are domain I. The interval 65–143 (EKRERELFRE…AWESMPAIAT (79 aa)) is domain II. The interval 144–152 (LVVEPGSKT) is flexible linker. A domain III region spans residues 153–201 (AVTSAENDAVSALISLGFKPQEASRAVSAIQEENLSSEEMIRRALKGMV).

Belongs to the RuvA family. In terms of assembly, homotetramer. Forms an RuvA(8)-RuvB(12)-Holliday junction (HJ) complex. HJ DNA is sandwiched between 2 RuvA tetramers; dsDNA enters through RuvA and exits via RuvB. An RuvB hexamer assembles on each DNA strand where it exits the tetramer. Each RuvB hexamer is contacted by two RuvA subunits (via domain III) on 2 adjacent RuvB subunits; this complex drives branch migration. In the full resolvosome a probable DNA-RuvA(4)-RuvB(12)-RuvC(2) complex forms which resolves the HJ.

It is found in the cytoplasm. In terms of biological role, the RuvA-RuvB-RuvC complex processes Holliday junction (HJ) DNA during genetic recombination and DNA repair, while the RuvA-RuvB complex plays an important role in the rescue of blocked DNA replication forks via replication fork reversal (RFR). RuvA specifically binds to HJ cruciform DNA, conferring on it an open structure. The RuvB hexamer acts as an ATP-dependent pump, pulling dsDNA into and through the RuvAB complex. HJ branch migration allows RuvC to scan DNA until it finds its consensus sequence, where it cleaves and resolves the cruciform DNA. This is Holliday junction branch migration complex subunit RuvA from Stutzerimonas stutzeri (strain A1501) (Pseudomonas stutzeri).